The sequence spans 156 residues: MSKWVYPILSIPEDKLAKAVIKNIDASVRDLYNVCKAIRGMNLKEAREFLNNVLEEKEALPFWRYSHGTSHRSNISRKWKVKSGRYPKKAIKYVLKLLDNAENNANSKGLDIDNLKIVHIAAHKGLVLKRYMTRAFGRSTRKYKYLSHIEVILGEV.

Belongs to the universal ribosomal protein uL22 family. Part of the 50S ribosomal subunit.

Its function is as follows. This protein binds specifically to 23S rRNA. It makes multiple contacts with different domains of the 23S rRNA in the assembled 50S subunit and ribosome. The globular domain of the protein is located near the polypeptide exit tunnel on the outside of the subunit, while an extended beta-hairpin is found that lines the wall of the exit tunnel in the center of the 70S ribosome. The polypeptide is Large ribosomal subunit protein uL22 (Sulfolobus acidocaldarius (strain ATCC 33909 / DSM 639 / JCM 8929 / NBRC 15157 / NCIMB 11770)).